Here is a 305-residue protein sequence, read N- to C-terminus: Acyl transferase (305 aa).

Active-site charge relay system residues include Ser-116, Asp-213, and His-243.

It belongs to the LuxD family.

It functions in the pathway lipid metabolism; fatty acid reduction for biolumincescence. Its function is as follows. Acyl transferase is part of the fatty acid reductase system required for aldehyde biosynthesis; it produces fatty acids for the luminescent reaction. This chain is Acyl transferase, found in Shewanella woodyi (strain ATCC 51908 / MS32).